The primary structure comprises 50 residues: VVGGDECNINEHRSLVAIFNSTGFFCSGILLNQEWVLTASHCDSTNFQMK.

Positions 1 to 50 (VVGGDECNINEHRSLVAIFNSTGFFCSGILLNQEWVLTASHCDSTNFQMK) constitute a Peptidase S1 domain. The N-linked (GlcNAc...) asparagine glycan is linked to N20. C26 and C42 are oxidised to a cystine. Residue H41 is the Charge relay system of the active site.

It belongs to the peptidase S1 family. Snake venom subfamily. Monomer. N-glycosylated. Expressed by the venom gland.

Its subcellular location is the secreted. Inhibited by serine protease inhibitors PMSF, benzamidine, leupeptin and aprotinin, as well as by copper (Cu2+) and manganese (Mn2+) ions. Not inhibited by metalloprotease inhibitors EDTA, EGTA and 1,10-phenanthroline, as well as by barium (Ba2+) and calcium ion (Ca2+). In terms of biological role, snake venom serine protease that interferes with the hemostatic system of the prey. It preferentially degrades the Bbeta chain (FGB) of fibrinogen, with minor effects on the Aalpha chain (FGA). It presents a lower ability to degrade fibrin clots than BpirSP41. It hydrolyzes chromogenic substrates S-2238 (used for testing thrombin activity), S-2222 (factor Xa), S-2266 (glandular kallikrein and factor XIa), S-2302 (plasma kallikrein, factor XIa and XIIa), and S-2251 (plasmin). It shows a decrease in the clotting time of human plasma in the presence of increasing doses of the enzyme. Its minimum coagulant dose (MCD) is 3.5 ug. It also promotes platelet aggregation in a concentration-dependent manner in the presence or absence of calcium. It also shows 20% inhibition of the hemolytic activity promoted by the complement pathways and possess only a minor role in the induction of edema and pain in rat. The sequence is that of Thrombin-like enzyme BpirSP27 from Bothrops pirajai (Piraja's lancehead).